The following is a 319-amino-acid chain: Multivesicular body subunit 12B (319 aa).

Residues 1–50 (MRSCFCVRRSRDPPPPQPPPPPPQRGTDQSTMPEVKDLSEALPETSMDPI) are disordered. Positions 13 to 24 (PPPPQPPPPPPQ) are enriched in pro residues. Phosphoserine occurs at positions 46 and 101. An MABP domain is found at 47 to 193 (MDPITGVGVV…SMGIWYRMGR (147 aa)). Residues T122, T204, and T205 each carry the phosphothreonine modification. The segment at 195 to 222 (PRNHDSSQPTTPSQSSAASTPAPNLPRH) is disordered. The span at 200-216 (SSQPTTPSQSSAASTPA) shows a compositional bias: low complexity. Position 224 is a phosphoserine (S224). Positions 254 to 303 (MDGVPFMISEKFSCVPESMQPFDLLGITIKSLAEIEKEYEYSFRTEQSAA) constitute a UMA domain. The tract at residues 299 to 319 (EQSAAARLPPSPTRCQQIPQS) is disordered. Position 309 is a phosphoserine (S309).

It belongs to the MVB12 family. Component of the ESCRT-I complex (endosomal sorting complex required for transport I) which consists of TSG101, VPS28, a VPS37 protein (VPS37A to -D) and MVB12A or MVB12B in a 1:1:1:1 stoichiometry. Interacts with TSG101; the association appears to be mediated by the TSG101-VPS37 binary subcomplex. Interacts with VPS28. Interacts with VPS37B; the association appears to be mediated by the TSG101-VPS37 binary subcomplex. Interacts with VPS37C; the association appears to be mediated by the TSG101-VPS37 binary subcomplex.

It is found in the endosome. The protein localises to the late endosome membrane. Component of the ESCRT-I complex, a regulator of vesicular trafficking process. Required for the sorting of endocytic ubiquitinated cargos into multivesicular bodies. The sequence is that of Multivesicular body subunit 12B (MVB12B) from Homo sapiens (Human).